The following is a 174-amino-acid chain: MTNISVIAKPYAKAAFEFANEHNLLQQWSKLLQTFSELIKDKSVAAIVSSPTISQIEVVDALKKQLDENFFNFLALIAENKKMLIMPEIADQFESIKKIHNNVRVADVTLAYATDKNILDSLKTSLEKKFGCTIDMHINIDPAIIGGAVVKVGDTVIDSSVSGHLEKLKSILLS.

Belongs to the ATPase delta chain family. F-type ATPases have 2 components, F(1) - the catalytic core - and F(0) - the membrane proton channel. F(1) has five subunits: alpha(3), beta(3), gamma(1), delta(1), epsilon(1). F(0) has three main subunits: a(1), b(2) and c(10-14). The alpha and beta chains form an alternating ring which encloses part of the gamma chain. F(1) is attached to F(0) by a central stalk formed by the gamma and epsilon chains, while a peripheral stalk is formed by the delta and b chains.

The protein resides in the cell inner membrane. Functionally, f(1)F(0) ATP synthase produces ATP from ADP in the presence of a proton or sodium gradient. F-type ATPases consist of two structural domains, F(1) containing the extramembraneous catalytic core and F(0) containing the membrane proton channel, linked together by a central stalk and a peripheral stalk. During catalysis, ATP synthesis in the catalytic domain of F(1) is coupled via a rotary mechanism of the central stalk subunits to proton translocation. This protein is part of the stalk that links CF(0) to CF(1). It either transmits conformational changes from CF(0) to CF(1) or is implicated in proton conduction. In Francisella tularensis subsp. mediasiatica (strain FSC147), this protein is ATP synthase subunit delta.